The primary structure comprises 506 residues: Cobyric acid synthase (506 aa).

Residues 260-453 (KVGVAAIYFP…FHGIFNEPAV (194 aa)) form the GATase cobBQ-type domain. Catalysis depends on cysteine 341, which acts as the Nucleophile. Histidine 445 is an active-site residue.

It belongs to the CobB/CobQ family. CobQ subfamily.

It functions in the pathway cofactor biosynthesis; adenosylcobalamin biosynthesis. Functionally, catalyzes amidations at positions B, D, E, and G on adenosylcobyrinic A,C-diamide. NH(2) groups are provided by glutamine, and one molecule of ATP is hydrogenolyzed for each amidation. This chain is Cobyric acid synthase, found in Chlorobium chlorochromatii (strain CaD3).